Here is a 346-residue protein sequence, read N- to C-terminus: E3 ubiquitin-protein ligase ARK2C (346 aa).

Disordered regions lie at residues 23-76 and 267-288; these read PFQR…QHSG and PHKY…GEES. The interval 266–268 is ubiquitin binding; that stretch reads FPH. Positions 275–284 are enriched in basic and acidic residues; it reads PQDGKGKKDE. Zn(2+) contacts are provided by Cys294 and Cys297. The RING-type; atypical zinc finger occupies 294–335; it reads CTICLSMLEDGEDVRRLPCMHLFHQLCVDQWLAMSKKCPICR. Residues 309 to 313 are ubiquitin binding; it reads RLPCM. Zn(2+) is bound by residues His317 and Cys320.

The protein belongs to the Arkadia family. As to quaternary structure, monomer; binding to the ubiquitin-conjugating enzyme E2 does not trigger homodimerization.

Its subcellular location is the nucleus. The catalysed reaction is S-ubiquitinyl-[E2 ubiquitin-conjugating enzyme]-L-cysteine + [acceptor protein]-L-lysine = [E2 ubiquitin-conjugating enzyme]-L-cysteine + N(6)-ubiquitinyl-[acceptor protein]-L-lysine.. With respect to regulation, binds free ubiquitin non-covalently via its RING-type zinc finger. Ubiquitin-binding leads to enhance the E3 ubiquitin-protein ligase activity by stabilizing the ubiquitin-conjugating enzyme E2 (donor ubiquitin) in the 'closed' conformation and activating ubiquitin transfer. E3 ubiquitin-protein ligase that acts as a regulator of motor axon elongation. Required for efficient motor axon extension in the dorsal forelimb by enhancing the transcriptional responses of the SMAD1/SMAD5/SMAD8 effectors, which are activated downstream of BMP. Acts by mediating ubiquitination and degradation of SMAD inhibitors such as SMAD6, SMAD7, SKI and SNON isoform of SKIL. This Homo sapiens (Human) protein is E3 ubiquitin-protein ligase ARK2C.